The chain runs to 287 residues: MTFSEIILTLQSYWREQGCVILQPYDMPAGAGTYHQATFLRSLGPKPWATAYVAPSRRPTDGRYGENPNRLGAYYQFQVLIKPSPENIQELYLKSLERLGLDLKKHDIRFVEDNWESPTLGAWGLGWEVWLDGMEVTQFTYFQQVGGIACELISGEITYGLERLAMYLQDIDNVYDIVWDDKNGVVTYGDVHKQGEYEWSKYNFEIADTAMLFNQFENAFKECKRCLEAKISLPAYDYCMLAAHTFNVLDARGAISVTQRQEHILKIRELTKECALTYKASLEEKGE.

The protein belongs to the class-II aminoacyl-tRNA synthetase family. As to quaternary structure, tetramer of two alpha and two beta subunits.

Its subcellular location is the cytoplasm. It carries out the reaction tRNA(Gly) + glycine + ATP = glycyl-tRNA(Gly) + AMP + diphosphate. This chain is Glycine--tRNA ligase alpha subunit, found in Campylobacter curvus (strain 525.92).